Reading from the N-terminus, the 45-residue chain is Large ribosomal subunit protein bL34 (45 aa).

The interval 1-24 is disordered; that stretch reads MTKRTFGGTSRKRKRVSGFRVRMR. Positions 10-24 are enriched in basic residues; the sequence is SRKRKRVSGFRVRMR.

Belongs to the bacterial ribosomal protein bL34 family.

The chain is Large ribosomal subunit protein bL34 from Prochlorococcus marinus (strain MIT 9303).